Consider the following 306-residue polypeptide: Methionyl-tRNA formyltransferase (306 aa).

110–113 (SLLP) contributes to the (6S)-5,6,7,8-tetrahydrofolate binding site.

It belongs to the Fmt family.

It catalyses the reaction L-methionyl-tRNA(fMet) + (6R)-10-formyltetrahydrofolate = N-formyl-L-methionyl-tRNA(fMet) + (6S)-5,6,7,8-tetrahydrofolate + H(+). Attaches a formyl group to the free amino group of methionyl-tRNA(fMet). The formyl group appears to play a dual role in the initiator identity of N-formylmethionyl-tRNA by promoting its recognition by IF2 and preventing the misappropriation of this tRNA by the elongation apparatus. The sequence is that of Methionyl-tRNA formyltransferase from Brucella ovis (strain ATCC 25840 / 63/290 / NCTC 10512).